Consider the following 217-residue polypeptide: Thiamine-phosphate synthase (217 aa).

Residues 39-43 (QYRDK) and asparagine 71 contribute to the 4-amino-2-methyl-5-(diphosphooxymethyl)pyrimidine site. Positions 72 and 91 each coordinate Mg(2+). Threonine 110 lines the 4-amino-2-methyl-5-(diphosphooxymethyl)pyrimidine pocket. 2-[(2R,5Z)-2-carboxy-4-methylthiazol-5(2H)-ylidene]ethyl phosphate is bound at residue 137–139 (SNT). Residue lysine 140 participates in 4-amino-2-methyl-5-(diphosphooxymethyl)pyrimidine binding. Glycine 167 is a 2-[(2R,5Z)-2-carboxy-4-methylthiazol-5(2H)-ylidene]ethyl phosphate binding site.

The protein belongs to the thiamine-phosphate synthase family. Mg(2+) serves as cofactor.

It carries out the reaction 2-[(2R,5Z)-2-carboxy-4-methylthiazol-5(2H)-ylidene]ethyl phosphate + 4-amino-2-methyl-5-(diphosphooxymethyl)pyrimidine + 2 H(+) = thiamine phosphate + CO2 + diphosphate. The catalysed reaction is 2-(2-carboxy-4-methylthiazol-5-yl)ethyl phosphate + 4-amino-2-methyl-5-(diphosphooxymethyl)pyrimidine + 2 H(+) = thiamine phosphate + CO2 + diphosphate. It catalyses the reaction 4-methyl-5-(2-phosphooxyethyl)-thiazole + 4-amino-2-methyl-5-(diphosphooxymethyl)pyrimidine + H(+) = thiamine phosphate + diphosphate. Its pathway is cofactor biosynthesis; thiamine diphosphate biosynthesis; thiamine phosphate from 4-amino-2-methyl-5-diphosphomethylpyrimidine and 4-methyl-5-(2-phosphoethyl)-thiazole: step 1/1. Condenses 4-methyl-5-(beta-hydroxyethyl)thiazole monophosphate (THZ-P) and 2-methyl-4-amino-5-hydroxymethyl pyrimidine pyrophosphate (HMP-PP) to form thiamine monophosphate (TMP). The chain is Thiamine-phosphate synthase from Saccharophagus degradans (strain 2-40 / ATCC 43961 / DSM 17024).